Reading from the N-terminus, the 136-residue chain is Large ribosomal subunit protein uL16c (136 aa).

The protein belongs to the universal ribosomal protein uL16 family. As to quaternary structure, part of the 50S ribosomal subunit.

It localises to the plastid. The protein localises to the chloroplast. The polypeptide is Large ribosomal subunit protein uL16c (Guizotia abyssinica (Niger)).